A 70-amino-acid chain; its full sequence is Putative membrane protein insertion efficiency factor (70 aa).

It belongs to the UPF0161 family.

The protein resides in the cell inner membrane. In terms of biological role, could be involved in insertion of integral membrane proteins into the membrane. The chain is Putative membrane protein insertion efficiency factor from Desulforapulum autotrophicum (strain ATCC 43914 / DSM 3382 / VKM B-1955 / HRM2) (Desulfobacterium autotrophicum).